The following is a 308-amino-acid chain: Methionyl-tRNA formyltransferase (308 aa).

109–112 (SLLP) contacts (6S)-5,6,7,8-tetrahydrofolate.

This sequence belongs to the Fmt family.

The enzyme catalyses L-methionyl-tRNA(fMet) + (6R)-10-formyltetrahydrofolate = N-formyl-L-methionyl-tRNA(fMet) + (6S)-5,6,7,8-tetrahydrofolate + H(+). In terms of biological role, attaches a formyl group to the free amino group of methionyl-tRNA(fMet). The formyl group appears to play a dual role in the initiator identity of N-formylmethionyl-tRNA by promoting its recognition by IF2 and preventing the misappropriation of this tRNA by the elongation apparatus. The protein is Methionyl-tRNA formyltransferase of Phenylobacterium zucineum (strain HLK1).